The chain runs to 79 residues: Cytochrome b (79 aa).

Transmembrane regions (helical) follow at residues 1-7 (TALLLAA), 31-52 (WLIRNLHANGASFFFICIYLHI), and 67-79 (WNIGVILLLTLMA). Heme b is bound by residues H37 and H51.

Belongs to the cytochrome b family. In terms of assembly, the cytochrome bc1 complex contains 11 subunits: 3 respiratory subunits (MT-CYB, CYC1 and UQCRFS1), 2 core proteins (UQCRC1 and UQCRC2) and 6 low-molecular weight proteins (UQCRH/QCR6, UQCRB/QCR7, UQCRQ/QCR8, UQCR10/QCR9, UQCR11/QCR10 and a cleavage product of UQCRFS1). This cytochrome bc1 complex then forms a dimer. Heme b serves as cofactor.

The protein localises to the mitochondrion inner membrane. Its function is as follows. Component of the ubiquinol-cytochrome c reductase complex (complex III or cytochrome b-c1 complex) that is part of the mitochondrial respiratory chain. The b-c1 complex mediates electron transfer from ubiquinol to cytochrome c. Contributes to the generation of a proton gradient across the mitochondrial membrane that is then used for ATP synthesis. The chain is Cytochrome b (MT-CYB) from Pomatostomus superciliosus (White-browed babbler).